The sequence spans 205 residues: Octanoyltransferase (205 aa).

The BPL/LPL catalytic domain occupies 30-205 (NSSDELVWLL…ILKKEFYKIF (176 aa)). Substrate-binding positions include 68–75 (RGGKYTYH), 140–142 (AFG), and 153–155 (GIA). Cysteine 171 serves as the catalytic Acyl-thioester intermediate.

The protein belongs to the LipB family.

Its subcellular location is the cytoplasm. It catalyses the reaction octanoyl-[ACP] + L-lysyl-[protein] = N(6)-octanoyl-L-lysyl-[protein] + holo-[ACP] + H(+). It functions in the pathway protein modification; protein lipoylation via endogenous pathway; protein N(6)-(lipoyl)lysine from octanoyl-[acyl-carrier-protein]: step 1/2. Catalyzes the transfer of endogenously produced octanoic acid from octanoyl-acyl-carrier-protein onto the lipoyl domains of lipoate-dependent enzymes. Lipoyl-ACP can also act as a substrate although octanoyl-ACP is likely to be the physiological substrate. This chain is Octanoyltransferase, found in Wolbachia sp. subsp. Brugia malayi (strain TRS).